A 288-amino-acid polypeptide reads, in one-letter code: MKKYLLPVLVLCLGYYYSTNEEFRPEMLQGKKVIVTGASKGIGREMAYHLSKMGAHVVLTARSEEGLQKVVSRCLELGAASAHYIAGTMEDMAFAERFVVEAGKLLGGLDMLILNHITQTTMSLFHDDIHSVRRSMEVNFLSYVVLSTAALPMLKQSNGSIAIISSMAGKMTQPLIASYSASKFALDGFFSTIRKEHLMTKVNVSITLCVLGFIDTETALKETSGIILSQAAPKEECALEIIKGTVLRKDEVYYDKSSWTPLLLGNPGRRIMEFLSLRSYNRDLFVSN.

The Cytoplasmic portion of the chain corresponds to 1-4 (MKKY). Residues 5–20 (LLPVLVLCLGYYYSTN) form a helical; Signal-anchor for type II membrane protein membrane-spanning segment. Residues 21 to 288 (EEFRPEMLQG…SYNRDLFVSN (268 aa)) lie on the Lumenal side of the membrane. NADP(+) contacts are provided by residues 37–63 (GASK…TARS), 88–89 (TM), and 115–117 (NHI). N-linked (GlcNAc...) asparagine glycosylation occurs at N158. S166 serves as a coordination point for substrate. Catalysis depends on Y179, which acts as the Proton acceptor. Residue 179–183 (YSASK) participates in NADP(+) binding. N203 is a glycosylation site (N-linked (GlcNAc...) asparagine). Residues 212 to 218 (GFIDTET) and 214 to 218 (IDTET) contribute to the NADP(+) site.

Belongs to the short-chain dehydrogenases/reductases (SDR) family. In terms of assembly, homodimer. Glycosylated. As to expression, liver, kidney, lung and testis. Brain. Expressed in liver (at protein level).

The protein resides in the endoplasmic reticulum membrane. It carries out the reaction an 11beta-hydroxysteroid + NADP(+) = an 11-oxosteroid + NADPH + H(+). The enzyme catalyses corticosterone + NADP(+) = 11-dehydrocorticosterone + NADPH + H(+). The catalysed reaction is a 7beta-hydroxysteroid + NADP(+) = a 7-oxosteroid + NADPH + H(+). It catalyses the reaction 7-oxocholesterol + NADPH + H(+) = 7beta-hydroxycholesterol + NADP(+). It carries out the reaction chenodeoxycholate + NADP(+) = 7-oxolithocholate + NADPH + H(+). The enzyme catalyses 7-oxolithocholate + NADPH + H(+) = ursodeoxycholate + NADP(+). The catalysed reaction is glycochenodeoxycholate + NADP(+) = 7-oxoglycolithocholate + NADPH + H(+). It catalyses the reaction taurochenodeoxycholate + NADP(+) = 7-oxotaurolithocholate + NADPH + H(+). It carries out the reaction tauroursodeoxycholate + NADP(+) = 7-oxotaurolithocholate + NADPH + H(+). The enzyme catalyses glycoursodeoxycholate + NADP(+) = 7-oxoglycolithocholate + NADPH + H(+). The catalysed reaction is 7-oxopregnenolone + NADPH + H(+) = 7beta-hydroxypregnenolone + NADP(+). It catalyses the reaction 3beta,7alpha-dihydroxyandrost-5-en-17-one + NADP(+) = 3beta-hydroxy-5-androstene-7,17-dione + NADPH + H(+). It carries out the reaction 3beta-hydroxy-5-androstene-7,17-dione + NADPH + H(+) = 3beta,7beta-dihydroxyandrost-5-en-17-one + NADP(+). The enzyme catalyses 3beta-hydroxy-5alpha-androstane-7,17-dione + NADPH + H(+) = 3beta,7beta-dihydroxy-5alpha-androstan-17-one + NADP(+). Its function is as follows. Controls the reversible conversion of biologically active glucocorticoids such as 11-dehydrocorticosterone to corticosterone using NADP(H). Participates in the corticosteroid receptor-mediated anti-inflammatory response, as well as metabolic and homeostatic processes. Bidirectional in vitro, predominantly functions as a reductase in vivo, thereby increasing the concentration of active glucocorticoids. It has broad substrate specificity, besides glucocorticoids, it accepts other steroid and sterol substrates. Interconverts 7-oxo- and 7-hydroxy-neurosteroids such as 7-oxopregnenolone and 7beta-hydroxypregnenolone, 7-oxodehydroepiandrosterone (3beta-hydroxy-5-androstene-7,17-dione) and 7beta-hydroxydehydroepiandrosterone (3beta,7beta-dihydroxyandrost-5-en-17-one), among others. Catalyzes the stereo-specific conversion of the major dietary oxysterol, 7-ketocholesterol (7-oxocholesterol), into the more polar 7-beta-hydroxycholesterol metabolite. 7-oxocholesterol is one of the most important oxysterols, it participates in several events such as induction of apoptosis, accumulation in atherosclerotic lesions, lipid peroxidation, and induction of foam cell formation. Mediates the 7-oxo reduction of 7-oxolithocholate mainly to chenodeoxycholate, and to a lesser extent to ursodeoxycholate, both in its free form and when conjugated to glycine or taurine, providing a link between glucocorticoid activation and bile acid metabolism. Catalyzes the synthesis of 7-beta-25-dihydroxycholesterol from 7-oxo-25-hydroxycholesterol in vitro, which acts as a ligand for the G-protein-coupled receptor (GPCR) Epstein-Barr virus-induced gene 2 (EBI2) and may thereby regulate immune cell migration. The polypeptide is 11-beta-hydroxysteroid dehydrogenase 1 (Rattus norvegicus (Rat)).